A 473-amino-acid polypeptide reads, in one-letter code: H(+)/Cl(-) exchange transporter ClcA (473 aa).

The Cytoplasmic segment spans residues 1–32; that stretch reads MKTDTSTFLAQQIVRLRRRDQIRRLMQRDKTP. A helical transmembrane segment spans residues 33–69; that stretch reads LAILFMAAVVGTLTGLVGVAFEKAVSWVQNMRIGALV. Residues 70–76 are Periplasmic-facing; it reads QVADHAF. A helical membrane pass occupies residues 77–100; that stretch reads LLWPLAFILSALLAMVGYFLVRKF. The short motif at 106–110 is the Selectivity filter part_1 element; that stretch reads GSGIP. Position 107 (S107) interacts with chloride. Residues 109–116 constitute an intramembrane region (helical); it reads IPEIEGAL. Residues 117–123 are Cytoplasmic-facing; the sequence is EELRPVR. A run of 2 helical transmembrane segments spans residues 124-141 and 148-166; these read WWRV…TLGA and EGPT…LDVF. The Selectivity filter part_2 signature appears at 146 to 150; sequence GREGP. Residues 167-176 are Cytoplasmic-facing; it reads RMRSAEARHT. The segment at residues 177 to 189 is an intramembrane region (helical); that stretch reads LLATGAAAGLSAA. Residues 190-192 constitute an intramembrane region (note=Loop between two helices); sequence FNA. Positions 193–201 form an intramembrane region, helical; the sequence is PLAGILFII. The Cytoplasmic portion of the chain corresponds to 202-214; it reads EEMRPQFRYNLIS. The helical transmembrane segment at 215–232 threads the bilayer; sequence IKAVFTGVIMSSIVFRIF. Residues 233 to 252 are Periplasmic-facing; that stretch reads NGEAPIIEVGKLSDAPVNTL. The helical transmembrane segment at 253–281 threads the bilayer; the sequence is WLYLILGIIFGCVGPVFNSLVLRTQDMFQ. Residues 282–287 are Cytoplasmic-facing; it reads RFHGGE. A helical membrane pass occupies residues 288 to 308; it reads IKKWVLMGGAIGGLCGILGLI. Topologically, residues 309–329 are periplasmic; that stretch reads EPAAAGGGFNLIPIAAAGNFS. A helical transmembrane segment spans residues 330 to 349; the sequence is VGLLLFIFITRVVTTLLCFS. The Cytoplasmic segment spans residues 350-354; sequence SGAPG. The Selectivity filter part_3 motif lies at 355–359; that stretch reads GIFAP. Residues 355–378 form a helical membrane-spanning segment; sequence GIFAPMLALGTLLGTAFGMAAAVL. Chloride-binding residues include I356 and F357. Residues 379-386 are Periplasmic-facing; the sequence is FPQYHLEA. Residues 387-401 constitute an intramembrane region (helical); the sequence is GTFAIAGMGALMAAS. The segment at residues 402–404 is an intramembrane region (note=Loop between two helices); the sequence is VRA. The helical intramembrane region spans 405-416; that stretch reads PLTGIVLVLEMT. The segment at residues 417–421 is an intramembrane region (note=Loop between two helices); sequence DNYQL. The helical transmembrane segment at 422–438 threads the bilayer; that stretch reads ILPMIITCLGATLLAQF. The Cytoplasmic segment spans residues 439 to 473; it reads LGGKPLYSTILARTLAKQDAEQAEKNQNAPADENT. Y445 is a binding site for chloride.

This sequence belongs to the chloride channel (TC 2.A.49) family. ClcA subfamily. Homodimer.

The protein localises to the cell inner membrane. The catalysed reaction is 2 chloride(in) + H(+)(out) = 2 chloride(out) + H(+)(in). Functionally, proton-coupled chloride transporter. Functions as antiport system and exchanges two chloride ions for 1 proton. Probably acts as an electrical shunt for an outwardly-directed proton pump that is linked to amino acid decarboxylation, as part of the extreme acid resistance (XAR) response. The sequence is that of H(+)/Cl(-) exchange transporter ClcA (clcA) from Salmonella typhimurium (strain LT2 / SGSC1412 / ATCC 700720).